The following is a 95-amino-acid chain: uncharacterized protein (95 aa).

Positions 1–21 (MKVLSISLIFFALLLTGCSQV) are cleaved as a signal peptide.

This is an uncharacterized protein from Archaeoglobus fulgidus (strain ATCC 49558 / DSM 4304 / JCM 9628 / NBRC 100126 / VC-16).